Here is a 117-residue protein sequence, read N- to C-terminus: Large ribosomal subunit protein bL20 (117 aa).

It belongs to the bacterial ribosomal protein bL20 family.

Binds directly to 23S ribosomal RNA and is necessary for the in vitro assembly process of the 50S ribosomal subunit. It is not involved in the protein synthesizing functions of that subunit. The protein is Large ribosomal subunit protein bL20 of Vibrio campbellii (strain ATCC BAA-1116).